The following is a 29-amino-acid chain: GKPICGETCAKGKCYTPKCTCNWPICYKN.

The cyclopeptide (Gly-Asn) cross-link spans 1–29 (GKPICGETCAKGKCYTPKCTCNWPICYKN). 3 cysteine pairs are disulfide-bonded: C5/C19, C9/C21, and C14/C26.

Belongs to the cyclotide family. Post-translationally, this is a cyclic peptide.

Its function is as follows. Probably participates in a plant defense mechanism. The sequence is that of Cyclotide mobo-B from Melicytus obovatus (Hymenanthera obovata).